Consider the following 776-residue polypeptide: Endonuclease MutS2 (776 aa).

Residue 330–337 coordinates ATP; the sequence is GPNTGGKT. The Smr domain maps to 701-776; sequence LDLRGMRYEE…GSGATIAILK (76 aa).

This sequence belongs to the DNA mismatch repair MutS family. MutS2 subfamily. In terms of assembly, homodimer. Binds to stalled ribosomes, contacting rRNA.

Its function is as follows. Endonuclease that is involved in the suppression of homologous recombination and thus may have a key role in the control of bacterial genetic diversity. In terms of biological role, acts as a ribosome collision sensor, splitting the ribosome into its 2 subunits. Detects stalled/collided 70S ribosomes which it binds and splits by an ATP-hydrolysis driven conformational change. Acts upstream of the ribosome quality control system (RQC), a ribosome-associated complex that mediates the extraction of incompletely synthesized nascent chains from stalled ribosomes and their subsequent degradation. Probably generates substrates for RQC. In Lactococcus lactis subsp. lactis (strain IL1403) (Streptococcus lactis), this protein is Endonuclease MutS2.